The chain runs to 386 residues: 23S rRNA (uracil(747)-C(5))-methyltransferase RlmC (386 aa).

[4Fe-4S] cluster-binding residues include Cys-7, Cys-15, Cys-18, and Cys-94. Positions 219, 248, 269, and 316 each coordinate S-adenosyl-L-methionine. Cys-343 functions as the Nucleophile in the catalytic mechanism.

This sequence belongs to the class I-like SAM-binding methyltransferase superfamily. RNA M5U methyltransferase family. RlmC subfamily.

The enzyme catalyses uridine(747) in 23S rRNA + S-adenosyl-L-methionine = 5-methyluridine(747) in 23S rRNA + S-adenosyl-L-homocysteine + H(+). In terms of biological role, catalyzes the formation of 5-methyl-uridine at position 747 (m5U747) in 23S rRNA. This Shewanella oneidensis (strain ATCC 700550 / JCM 31522 / CIP 106686 / LMG 19005 / NCIMB 14063 / MR-1) protein is 23S rRNA (uracil(747)-C(5))-methyltransferase RlmC.